Here is a 207-residue protein sequence, read N- to C-terminus: Outer-membrane lipoprotein carrier protein (207 aa).

Residues 1-23 form the signal peptide; it reads MMKPHNLFQFLAVCSLTVAVASA.

The protein belongs to the LolA family. As to quaternary structure, monomer.

It is found in the periplasm. Its function is as follows. Participates in the translocation of lipoproteins from the inner membrane to the outer membrane. Only forms a complex with a lipoprotein if the residue after the N-terminal Cys is not an aspartate (The Asp acts as a targeting signal to indicate that the lipoprotein should stay in the inner membrane). The polypeptide is Outer-membrane lipoprotein carrier protein (Neisseria gonorrhoeae (strain ATCC 700825 / FA 1090)).